A 580-amino-acid polypeptide reads, in one-letter code: Long-chain-fatty-acid--AMP ligase FadD28 (580 aa).

Positions 421-440 (SERTFGGKIVTPSPGTPEGP) are disordered.

The protein belongs to the ATP-dependent AMP-binding enzyme family.

The enzyme catalyses holo-[mycocerosate synthase] + a long-chain fatty acid + ATP = a long-chain fatty acyl-[mycocerosate synthase] + AMP + diphosphate. The catalysed reaction is a long-chain fatty acid + ATP + H(+) = a long-chain fatty acyl-AMP + diphosphate. It catalyses the reaction holo-[mycocerosate synthase] + a long-chain fatty acyl-AMP = a long-chain fatty acyl-[mycocerosate synthase] + AMP + H(+). Its pathway is lipid metabolism; fatty acid biosynthesis. Its function is as follows. Involved in the biosynthesis of phthiocerol dimycocerosate (PDIM), a cell wall-associated lipid found only in pathogenic mycobacteria. Catalyzes the activation of long-chain fatty acids as acyl-adenylates (acyl-AMP), which are then transferred to the multifunctional polyketide synthase Mas for further chain extension. The sequence is that of Long-chain-fatty-acid--AMP ligase FadD28 (fadD28) from Mycobacterium tuberculosis (strain CDC 1551 / Oshkosh).